Here is a 444-residue protein sequence, read N- to C-terminus: Divalent metal cation transporter MntH (444 aa).

Transmembrane regions (helical) follow at residues 39–59 (LLFA…GNFA), 69–89 (GYTL…FQAL), 109–128 (FSRP…AMAT), 146–166 (LPLI…LLFE), 175–195 (LVIG…MFIA), 215–235 (TALT…AVYL), 264–284 (VILA…MAAS), 304–324 (TPLL…TSGI), 346–366 (IPVW…ILAG), 372–392 (ALVI…IALI), and 417–437 (AAAI…GFTI).

It belongs to the NRAMP family.

It is found in the cell inner membrane. H(+)-stimulated, divalent metal cation uptake system. The protein is Divalent metal cation transporter MntH of Granulibacter bethesdensis (strain ATCC BAA-1260 / CGDNIH1).